The primary structure comprises 491 residues: Aspartyl/glutamyl-tRNA(Asn/Gln) amidotransferase subunit B (491 aa).

The protein belongs to the GatB/GatE family. GatB subfamily. Heterotrimer of A, B and C subunits.

The enzyme catalyses L-glutamyl-tRNA(Gln) + L-glutamine + ATP + H2O = L-glutaminyl-tRNA(Gln) + L-glutamate + ADP + phosphate + H(+). It catalyses the reaction L-aspartyl-tRNA(Asn) + L-glutamine + ATP + H2O = L-asparaginyl-tRNA(Asn) + L-glutamate + ADP + phosphate + 2 H(+). Functionally, allows the formation of correctly charged Asn-tRNA(Asn) or Gln-tRNA(Gln) through the transamidation of misacylated Asp-tRNA(Asn) or Glu-tRNA(Gln) in organisms which lack either or both of asparaginyl-tRNA or glutaminyl-tRNA synthetases. The reaction takes place in the presence of glutamine and ATP through an activated phospho-Asp-tRNA(Asn) or phospho-Glu-tRNA(Gln). The polypeptide is Aspartyl/glutamyl-tRNA(Asn/Gln) amidotransferase subunit B (Burkholderia lata (strain ATCC 17760 / DSM 23089 / LMG 22485 / NCIMB 9086 / R18194 / 383)).